The chain runs to 62 residues: Short neurotoxin B (62 aa).

Residues 1-16 show a composition bias toward polar residues; the sequence is RRCFNHPSSQPQTNKS. The tract at residues 1–21 is disordered; sequence RRCFNHPSSQPQTNKSCPPGE. Cystine bridges form between cysteine 3/cysteine 24, cysteine 17/cysteine 41, cysteine 43/cysteine 54, and cysteine 55/cysteine 60.

It belongs to the three-finger toxin family. Short-chain subfamily. Type I alpha-neurotoxin sub-subfamily. In terms of tissue distribution, expressed by the venom gland.

The protein resides in the secreted. Binds to muscle nicotinic acetylcholine receptor (nAChR) and inhibit acetylcholine from binding to the receptor, thereby impairing neuromuscular transmission. This Laticauda crockeri (Crocker's sea snake) protein is Short neurotoxin B.